The primary structure comprises 403 residues: Glucose-signaling factor 2 (403 aa).

Residues 1–177 (MEIYIRLNAD…QEVQANYSSL (177 aa)) lie on the Lumenal side of the membrane. N-linked (GlcNAc...) asparagine glycosylation is found at asparagine 89 and asparagine 173. The helical; Signal-anchor for type II membrane protein transmembrane segment at 178–198 (VAQWLFFVMHIFKVGIITLFL) threads the bilayer. Over 199-403 (KLGIANPISF…IKKNDLKKSN (205 aa)) the chain is Cytoplasmic. The stretch at 330-388 (ELENNLKKILEEYDGDIGKMNAEIRRFRRFGIYEPDEKLASLVKLRREIADEKEKASNN) forms a coiled coil.

It is found in the endoplasmic reticulum membrane. Its function is as follows. May be involved in the secretion of hexose transporters from the endoplasmic reticulum. Involved in secretion of GAL2 and HXT1. The sequence is that of Glucose-signaling factor 2 (GSF2) from Saccharomyces cerevisiae (strain ATCC 204508 / S288c) (Baker's yeast).